Reading from the N-terminus, the 438-residue chain is MSTMTPREIVHELDQHIVGQQDAKKAVAIALRNRWRRMQLDAKLRTEITPKNILMIGPTGVGKTEIARRLAKLTNAPFIKVEATKFTEVGYVGRDVESIIRDLVDSSIKMMREQEMTKVRHRAEEAAEERILNALLPPARGEDGAVEDSSTRQIFRKKLREGQLDDKEIEIDVSATPVGVEIMAPPGMEDMTSQLQNMFSSMNTGKTKKTKLTVKKAFKKLTDEEAAKLVNEEELKAQAIDAAEQNGIVFIDEIDKVAKREGNSGADVSREGVQRDLLPLIEGCTVSTKHGMIKTDHILFITSGAFHVSKPSDLIPELQGRLPIRVELQALTPDDFERILTEPTASLTEQHQSLLATEGTQIEFTADGIRKIAEIAYQVNKSTENIGARRLHTVLEKLLEEISFAAGESDNNVTIDAAFVDGQLGELTKNEDLSRFIL.

ATP-binding positions include Val-18, 60–65 (GVGKTE), Asp-252, Glu-317, and Arg-389.

It belongs to the ClpX chaperone family. HslU subfamily. A double ring-shaped homohexamer of HslV is capped on each side by a ring-shaped HslU homohexamer. The assembly of the HslU/HslV complex is dependent on binding of ATP.

The protein resides in the cytoplasm. Functionally, ATPase subunit of a proteasome-like degradation complex; this subunit has chaperone activity. The binding of ATP and its subsequent hydrolysis by HslU are essential for unfolding of protein substrates subsequently hydrolyzed by HslV. HslU recognizes the N-terminal part of its protein substrates and unfolds these before they are guided to HslV for hydrolysis. This is ATP-dependent protease ATPase subunit HslU from Saccharophagus degradans (strain 2-40 / ATCC 43961 / DSM 17024).